The chain runs to 293 residues: Homoserine kinase (293 aa).

Position 83 to 93 (83 to 93 (PITRGMGSSSA)) interacts with ATP.

This sequence belongs to the GHMP kinase family. Homoserine kinase subfamily.

The protein localises to the cytoplasm. It catalyses the reaction L-homoserine + ATP = O-phospho-L-homoserine + ADP + H(+). It functions in the pathway amino-acid biosynthesis; L-threonine biosynthesis; L-threonine from L-aspartate: step 4/5. Catalyzes the ATP-dependent phosphorylation of L-homoserine to L-homoserine phosphate. This chain is Homoserine kinase, found in Helicobacter pylori (strain J99 / ATCC 700824) (Campylobacter pylori J99).